The following is a 232-amino-acid chain: Large ribosomal subunit protein uL1 (232 aa).

It belongs to the universal ribosomal protein uL1 family. In terms of assembly, part of the 50S ribosomal subunit.

Functionally, binds directly to 23S rRNA. The L1 stalk is quite mobile in the ribosome, and is involved in E site tRNA release. Protein L1 is also a translational repressor protein, it controls the translation of the L11 operon by binding to its mRNA. This Bartonella henselae (strain ATCC 49882 / DSM 28221 / CCUG 30454 / Houston 1) (Rochalimaea henselae) protein is Large ribosomal subunit protein uL1.